The chain runs to 704 residues: CAP-Gly domain-containing linker protein 4 (704 aa).

3 ANK repeats span residues 65 to 101 (TSVS…NVND), 149 to 180 (TNMN…DVDA), and 186 to 215 (NFGT…NPAF). Positions 303-345 (GTTEFASGQWAGIELDEPEGKNNGSVGRVQYFKCAPKYGIFAP) constitute a CAP-Gly 1 domain. The disordered stretch occupies residues 353–479 (KDGRKTTTHT…SATSAANNSH (127 aa)). Low complexity-rich tracts occupy residues 360–371 (THTPSTRATPHA), 423–432 (SMSSSSSSSS), and 440–461 (PKKL…SLPS). Residues 504-546 (GTTNFAPGYWYGIELEKPHGKNDGSVGGVQYFSCSPRYGIFAP) form the CAP-Gly 2 domain. A phosphoserine mark is found at S556 and S608. The 43-residue stretch at 643 to 685 (GPTDFASGIWLGLELRSAKGKNDGAVGDKRYFTCKPNYGVLVR) folds into the CAP-Gly 3 domain.

This Mus musculus (Mouse) protein is CAP-Gly domain-containing linker protein 4 (Clip4).